The chain runs to 443 residues: Maintenance of mitochondrial morphology protein 1 (443 aa).

The Lumenal portion of the chain corresponds to 1 to 80 (MADLETSDLS…PSNTWSFTQG (80 aa)). Residues 81–101 (LIVGQLSVVFVIVIFIKFFVF) traverse the membrane as a helical segment. The Cytoplasmic portion of the chain corresponds to 102-443 (AESSPALAKS…NGDKVEDGSN (342 aa)). 2 disordered regions span residues 126–146 (KKDQ…TTAS) and 304–358 (LSAH…NDGT). The segment covering 131 to 142 (SSDDADPDDDSE) has biased composition (acidic residues). Residues 165 to 417 (SPESLDWFNV…EPRFQVVRLP (253 aa)) form the SMP-LTD domain.

Belongs to the MMM1 family. As to quaternary structure, homodimer. Component of the ER-mitochondria encounter structure (ERMES) or MDM complex, composed of MMM1, MDM10, MDM12 and MDM34. An MMM1 homodimer associates with one molecule of MDM12 on each side in a pairwise head-to-tail manner, and the SMP-LTD domains of MMM1 and MDM12 generate a continuous hydrophobic tunnel for phospholipid trafficking.

It localises to the endoplasmic reticulum membrane. In terms of biological role, component of the ERMES/MDM complex, which serves as a molecular tether to connect the endoplasmic reticulum (ER) and mitochondria. Components of this complex are involved in the control of mitochondrial shape and protein biogenesis, and function in nonvesicular lipid trafficking between the ER and mitochondria. The MDM12-MMM1 subcomplex functions in the major beta-barrel assembly pathway that is responsible for biogenesis of all outer membrane beta-barrel proteins, and acts in a late step after the SAM complex. The MDM10-MDM12-MMM1 subcomplex further acts in the TOM40-specific pathway after the action of the MDM12-MMM1 complex. Essential for establishing and maintaining the structure of mitochondria and maintenance of mtDNA nucleoids. This Scheffersomyces stipitis (strain ATCC 58785 / CBS 6054 / NBRC 10063 / NRRL Y-11545) (Yeast) protein is Maintenance of mitochondrial morphology protein 1.